The sequence spans 230 residues: 5'-methylthioadenosine/S-adenosylhomocysteine nucleosidase (230 aa).

Catalysis depends on glutamate 12, which acts as the Proton acceptor. Residues glycine 78, methionine 153, and 174-175 (ME) each bind substrate. Aspartate 198 functions as the Proton donor in the catalytic mechanism.

Belongs to the PNP/UDP phosphorylase family. MtnN subfamily.

The enzyme catalyses S-adenosyl-L-homocysteine + H2O = S-(5-deoxy-D-ribos-5-yl)-L-homocysteine + adenine. It carries out the reaction S-methyl-5'-thioadenosine + H2O = 5-(methylsulfanyl)-D-ribose + adenine. It catalyses the reaction 5'-deoxyadenosine + H2O = 5-deoxy-D-ribose + adenine. Its pathway is amino-acid biosynthesis; L-methionine biosynthesis via salvage pathway; S-methyl-5-thio-alpha-D-ribose 1-phosphate from S-methyl-5'-thioadenosine (hydrolase route): step 1/2. In terms of biological role, catalyzes the irreversible cleavage of the glycosidic bond in both 5'-methylthioadenosine (MTA) and S-adenosylhomocysteine (SAH/AdoHcy) to adenine and the corresponding thioribose, 5'-methylthioribose and S-ribosylhomocysteine, respectively. Also cleaves 5'-deoxyadenosine, a toxic by-product of radical S-adenosylmethionine (SAM) enzymes, into 5-deoxyribose and adenine. This is 5'-methylthioadenosine/S-adenosylhomocysteine nucleosidase from Tolumonas auensis (strain DSM 9187 / NBRC 110442 / TA 4).